The sequence spans 482 residues: GTPase Der (482 aa).

2 consecutive EngA-type G domains span residues 3 to 166 and 195 to 368; these read PVVA…SEQF and IKLA…NSAT. GTP-binding positions include 9–16, 56–60, 118–121, 201–208, 248–252, and 313–316; these read GRPNVGKS, DTGGI, NKVD, GKPNVGKS, DTAGV, and NKWD. A KH-like domain is found at 369 to 453; sequence KRINTSMLTR…PIKVEFREGA (85 aa).

This sequence belongs to the TRAFAC class TrmE-Era-EngA-EngB-Septin-like GTPase superfamily. EngA (Der) GTPase family. As to quaternary structure, associates with the 50S ribosomal subunit.

Functionally, GTPase that plays an essential role in the late steps of ribosome biogenesis. This chain is GTPase Der, found in Pseudoalteromonas atlantica (strain T6c / ATCC BAA-1087).